A 433-amino-acid polypeptide reads, in one-letter code: Histidinol dehydrogenase (433 aa).

NAD(+)-binding residues include Tyr-133, Gln-194, and Asn-217. Substrate is bound by residues Ser-240, Gln-262, and His-265. Gln-262 and His-265 together coordinate Zn(2+). Residues Glu-330 and His-331 each act as proton acceptor in the active site. Substrate contacts are provided by His-331, Asp-364, Glu-418, and His-423. Residue Asp-364 participates in Zn(2+) binding. His-423 contributes to the Zn(2+) binding site.

Belongs to the histidinol dehydrogenase family. The cofactor is Zn(2+).

It carries out the reaction L-histidinol + 2 NAD(+) + H2O = L-histidine + 2 NADH + 3 H(+). It functions in the pathway amino-acid biosynthesis; L-histidine biosynthesis; L-histidine from 5-phospho-alpha-D-ribose 1-diphosphate: step 9/9. Its function is as follows. Catalyzes the sequential NAD-dependent oxidations of L-histidinol to L-histidinaldehyde and then to L-histidine. The protein is Histidinol dehydrogenase of Dechloromonas aromatica (strain RCB).